The following is a 554-amino-acid chain: Nonribosomal peptide synthetase ALT12 (554 aa).

The Carrier domain occupies 1–76 (MASLEHMKRI…TLWEAMNDTQ (76 aa)). S35 carries the O-(pantetheine 4'-phosphoryl)serine modification. Positions 124–434 (VQDNVLCVAP…QRIQNEITST (311 aa)) are condensation.

This sequence belongs to the NRP synthetase family.

It participates in mycotoxin biosynthesis. Nonribosomal peptide synthetase; part of the gene cluster that mediates the biosynthesis of the host-selective toxins (HSTs) AAL-toxins, sphinganine-analog mycotoxins responsible for Alternaria stem canker on tomato by the tomato pathotype. The biosynthesis starts with the polyketide synthase ALT1-catalyzed C-16 carbon chain assembly from one starter acetyl-CoA unit with malonyl-CoA extender units. ALT1 also selectively transfers methyl groups at the first and the third cycle of chain elongation for AAL toxin. The C-16 polyketide chain is released from the enzyme by a nucleophilic attack of a carbanion, which is derived from R-carbon of glycin by decarboxylation, on the carbonyl carbon of polyketide acyl chain. This step is probably catalyzed by a pyridoxal 5'-phosphate-dependent aminoacyl transferase ALT4. The respective functions of the other enzymes encoded by the cluster have still to be elucidated. The sphingosine N-acyltransferase-like protein ALT7 seems not to act as a resistance/self-tolerance factor against the toxin in the toxin biosynthetic gene cluster, contrary to what is expected. This is Nonribosomal peptide synthetase ALT12 from Alternaria alternata (Alternaria rot fungus).